We begin with the raw amino-acid sequence, 363 residues long: MMKAFLVLDNGTIFEGESFGYETESVGEIVFNTSMAGYQEILTDPSYCNQIITLTYPMIGNYGIHPDNMESSKIQASGLIVKEYVDLPSNFKSEKTLSQFLKEYKIPAIQGIDTRKLTRFIRTNGSPNGGIFVASEYSPSFLEKVKSFPGIINADLAEVVTTSSKYIFGTHTGKKFKLAVYDYGVKTNILRLLDANGFAVTVYPAKTPSEEIMKEGTDAFFLSNGPGDPAPLDYAIASTQKIMEKRYPLFGICLGHQIIGLSLGKKTEKMKFGHRGGNQPVKNLETGQVEITSQNHGFAVIDDQKQDEPISFLNLNDHTVEGILKSGYPLLTVQYHPESAPGPNDSRYLFQKFYDLVEKTKKG.

The segment at 1-173 is CPSase; sequence MMKAFLVLDN…SKYIFGTHTG (173 aa). L-glutamine-binding residues include serine 46, glycine 225, and glycine 227. In terms of domain architecture, Glutamine amidotransferase type-1 spans 177-363; it reads KLAVYDYGVK…YDLVEKTKKG (187 aa). The active-site Nucleophile is the cysteine 253. Residues leucine 254, glutamine 257, asparagine 295, glycine 297, and phenylalanine 298 each coordinate L-glutamine. Active-site residues include histidine 336 and glutamate 338.

Belongs to the CarA family. As to quaternary structure, composed of two chains; the small (or glutamine) chain promotes the hydrolysis of glutamine to ammonia, which is used by the large (or ammonia) chain to synthesize carbamoyl phosphate. Tetramer of heterodimers (alpha,beta)4.

It catalyses the reaction hydrogencarbonate + L-glutamine + 2 ATP + H2O = carbamoyl phosphate + L-glutamate + 2 ADP + phosphate + 2 H(+). The catalysed reaction is L-glutamine + H2O = L-glutamate + NH4(+). The protein operates within amino-acid biosynthesis; L-arginine biosynthesis; carbamoyl phosphate from bicarbonate: step 1/1. Its pathway is pyrimidine metabolism; UMP biosynthesis via de novo pathway; (S)-dihydroorotate from bicarbonate: step 1/3. Its function is as follows. Small subunit of the glutamine-dependent carbamoyl phosphate synthetase (CPSase). CPSase catalyzes the formation of carbamoyl phosphate from the ammonia moiety of glutamine, carbonate, and phosphate donated by ATP, constituting the first step of 2 biosynthetic pathways, one leading to arginine and/or urea and the other to pyrimidine nucleotides. The small subunit (glutamine amidotransferase) binds and cleaves glutamine to supply the large subunit with the substrate ammonia. This Leptospira interrogans serogroup Icterohaemorrhagiae serovar copenhageni (strain Fiocruz L1-130) protein is Carbamoyl phosphate synthase small chain.